The chain runs to 305 residues: MRKRARIIYNPTSGKELFKRTLPDVLIKLEKAGFETSAYATEKVGDATTEAARSLEQNYDVLIAAGGDGTLNEVINGIAEKPNRPSLGIIPMGTVNDFGRALHLPTDIMSAIDVIIEGHMTRVDIGKMNSRYFINLAAGGQLTQVSYETPSKLKSIVGPFAYYIKGFEMLPQMKAVDIRIEYDDEVFQGEALLFLLGLTNSMAGFEKLVPDAKLDDGYFTLIIVEKANLAELGHIMTLASRGEHTKHPKVHYKKAKSISVSSFTDMQLNVDGEYGGKLPGNFLNLKQHIEVFTPNDIKNEEIIEQ.

In terms of domain architecture, DAGKc spans 1–132; the sequence is MRKRARIIYN…VDIGKMNSRY (132 aa). ATP contacts are provided by residues 10–14, threonine 41, 67–73, and threonine 94; these read NPTSG and GDGTLNE. Mg(2+) contacts are provided by lysine 213, aspartate 216, and tyrosine 218. The Proton acceptor role is filled by glutamate 273.

The protein belongs to the diacylglycerol/lipid kinase family. In terms of assembly, homodimer. It depends on Mg(2+) as a cofactor.

The enzyme catalyses a 1,2-diacyl-sn-glycerol + ATP = a 1,2-diacyl-sn-glycero-3-phosphate + ADP + H(+). In terms of biological role, catalyzes the phosphorylation of diacylglycerol (DAG) into phosphatidic acid. Is a key enzyme involved in the production of lipoteichoic acid by reintroducing DAG formed from the breakdown of membrane phospholipids into the phosphatidylglycerol biosynthetic pathway. This is Diacylglycerol kinase (dagK) from Staphylococcus saprophyticus subsp. saprophyticus (strain ATCC 15305 / DSM 20229 / NCIMB 8711 / NCTC 7292 / S-41).